Reading from the N-terminus, the 318-residue chain is Homoserine kinase (318 aa).

Residue 97-107 (PIGSGLGSSAC) participates in ATP binding.

It belongs to the GHMP kinase family. Homoserine kinase subfamily.

Its subcellular location is the cytoplasm. It carries out the reaction L-homoserine + ATP = O-phospho-L-homoserine + ADP + H(+). It functions in the pathway amino-acid biosynthesis; L-threonine biosynthesis; L-threonine from L-aspartate: step 4/5. Its function is as follows. Catalyzes the ATP-dependent phosphorylation of L-homoserine to L-homoserine phosphate. In Vibrio vulnificus (strain CMCP6), this protein is Homoserine kinase.